A 35-amino-acid chain; its full sequence is Photosystem II reaction center protein T (35 aa).

The chain crosses the membrane as a helical span at residues 3–23 (ALVYTFLLVGTLGIIFFAIFF).

The protein belongs to the PsbT family. As to quaternary structure, PSII is composed of 1 copy each of membrane proteins PsbA, PsbB, PsbC, PsbD, PsbE, PsbF, PsbH, PsbI, PsbJ, PsbK, PsbL, PsbM, PsbT, PsbY, PsbZ, Psb30/Ycf12, at least 3 peripheral proteins of the oxygen-evolving complex and a large number of cofactors. It forms dimeric complexes.

Its subcellular location is the plastid. It is found in the chloroplast thylakoid membrane. In terms of biological role, found at the monomer-monomer interface of the photosystem II (PS II) dimer, plays a role in assembly and dimerization of PSII. PSII is a light-driven water plastoquinone oxidoreductase, using light energy to abstract electrons from H(2)O, generating a proton gradient subsequently used for ATP formation. The protein is Photosystem II reaction center protein T of Zygnema circumcarinatum (Green alga).